A 304-amino-acid polypeptide reads, in one-letter code: D-alanine--D-alanine ligase (304 aa).

An ATP-grasp domain is found at Lys-103–Lys-299. Glu-129 to Ser-184 is an ATP binding site. Mg(2+)-binding residues include Asp-253, Glu-266, and Asn-268.

This sequence belongs to the D-alanine--D-alanine ligase family. The cofactor is Mg(2+). Mn(2+) is required as a cofactor.

It localises to the cytoplasm. The catalysed reaction is 2 D-alanine + ATP = D-alanyl-D-alanine + ADP + phosphate + H(+). The protein operates within cell wall biogenesis; peptidoglycan biosynthesis. In terms of biological role, cell wall formation. The protein is D-alanine--D-alanine ligase of Neisseria meningitidis serogroup A / serotype 4A (strain DSM 15465 / Z2491).